A 218-amino-acid chain; its full sequence is Ras-related protein R-Ras (218 aa).

The segment at Met-1–His-30 is disordered. Residues Ser-7–Gly-20 are compositionally biased toward gly residues. Gly-36 to Ala-44 contacts GTP. Residues Tyr-58–Tyr-66 carry the Effector region motif. Residues Asp-83–Gln-87, Asn-142–Asp-145, and Ser-172–Lys-174 contribute to the GTP site. A Cysteine methyl ester modification is found at Cys-215. Residue Cys-215 is the site of S-geranylgeranyl cysteine attachment. A propeptide spans Val-216–Leu-218 (removed in mature form).

The protein belongs to the small GTPase superfamily. Ras family. In terms of assembly, interacts with PLCE1. Interacts (active GTP-bound form preferentially) with RGS14. Interacts with OSBPL3. Interacts with ZDHHC19. Post-translationally, S-palmitoylated by ZDHHC19, leading to increased association with membranes and with rafts/caveolae as well as enhanced cell viability.

The protein resides in the cell membrane. The catalysed reaction is GTP + H2O = GDP + phosphate + H(+). Its function is as follows. GTP-binding protein with GTPase activity, likely involved in the regulation of MAPK signaling pathway and thereby controlling multiple cellular processes. Regulates the organization of the actin cytoskeleton. With OSPBL3, modulates integrin beta-1 (ITGB1) activity. This is Ras-related protein R-Ras (Rras) from Mus musculus (Mouse).